The primary structure comprises 345 residues: Flap endonuclease 1 (345 aa).

An N-domain region spans residues 1-103 (MGIKQLSKLL…KELEKRKERR (103 aa)). Asp-34 lines the Mg(2+) pocket. DNA is bound by residues Arg-47 and Arg-69. Positions 85, 157, 159, 178, and 180 each coordinate Mg(2+). Residues 121 to 252 (LMEMYDKRKT…KKALGLIKKH (132 aa)) are I-domain. Glu-157 provides a ligand contact to DNA. Residues Gly-230 and Asp-232 each coordinate DNA. Asp-232 contributes to the Mg(2+) binding site. The interval 333–341 (TQGRLDCFI) is interaction with PCNA.

This sequence belongs to the XPG/RAD2 endonuclease family. FEN1 subfamily. Interacts with PCNA. Three molecules of FEN1 bind to one PCNA trimer with each molecule binding to one PCNA monomer. PCNA stimulates the nuclease activity without altering cleavage specificity. The cofactor is Mg(2+). Phosphorylated. Phosphorylation upon DNA damage induces relocalization to the nuclear plasma.

It is found in the nucleus. Its subcellular location is the nucleolus. It localises to the nucleoplasm. The protein resides in the mitochondrion. Functionally, structure-specific nuclease with 5'-flap endonuclease and 5'-3' exonuclease activities involved in DNA replication and repair. During DNA replication, cleaves the 5'-overhanging flap structure that is generated by displacement synthesis when DNA polymerase encounters the 5'-end of a downstream Okazaki fragment. It enters the flap from the 5'-end and then tracks to cleave the flap base, leaving a nick for ligation. Also involved in the long patch base excision repair (LP-BER) pathway, by cleaving within the apurinic/apyrimidinic (AP) site-terminated flap. Acts as a genome stabilization factor that prevents flaps from equilibrating into structures that lead to duplications and deletions. Also possesses 5'-3' exonuclease activity on nicked or gapped double-stranded DNA, and exhibits RNase H activity. Also involved in replication and repair of rDNA and in repairing mitochondrial DNA. The chain is Flap endonuclease 1 from Encephalitozoon cuniculi (strain GB-M1) (Microsporidian parasite).